A 787-amino-acid polypeptide reads, in one-letter code: Endonuclease MutS2 (787 aa).

329 to 336 is a binding site for ATP; sequence GPNTGGKT. The Smr domain maps to 712-787; that stretch reads INLLGCTVDE…DAGVTIVDFK (76 aa).

Belongs to the DNA mismatch repair MutS family. MutS2 subfamily. Homodimer. Binds to stalled ribosomes, contacting rRNA.

In terms of biological role, endonuclease that is involved in the suppression of homologous recombination and thus may have a key role in the control of bacterial genetic diversity. Acts as a ribosome collision sensor, splitting the ribosome into its 2 subunits. Detects stalled/collided 70S ribosomes which it binds and splits by an ATP-hydrolysis driven conformational change. Acts upstream of the ribosome quality control system (RQC), a ribosome-associated complex that mediates the extraction of incompletely synthesized nascent chains from stalled ribosomes and their subsequent degradation. Probably generates substrates for RQC. In Lachnospira eligens (strain ATCC 27750 / DSM 3376 / VPI C15-48 / C15-B4) (Eubacterium eligens), this protein is Endonuclease MutS2.